The following is a 553-amino-acid chain: Hydroxylamine reductase (553 aa).

Cys3, Cys6, Cys18, and Cys25 together coordinate [2Fe-2S] cluster. The hybrid [4Fe-2O-2S] cluster site is built by His249, Glu273, Cys317, Cys405, Cys433, Cys459, Glu493, and Lys495. The residue at position 405 (Cys405) is a Cysteine persulfide.

It belongs to the HCP family. The cofactor is [2Fe-2S] cluster. Hybrid [4Fe-2O-2S] cluster serves as cofactor.

Its subcellular location is the cytoplasm. It carries out the reaction A + NH4(+) + H2O = hydroxylamine + AH2 + H(+). Its function is as follows. Catalyzes the reduction of hydroxylamine to form NH(3) and H(2)O. In Mannheimia succiniciproducens (strain KCTC 0769BP / MBEL55E), this protein is Hydroxylamine reductase.